The sequence spans 450 residues: Tubulin beta-3 chain (450 aa).

The MREI motif signature appears at 1 to 4; the sequence is MREI. GDP contacts are provided by Gly-10, Gln-11, Cys-12, and Gln-15. Gln-11 serves as a coordination point for GTP. Position 69 (Glu-69) interacts with GTP. Glu-69 lines the Mg(2+) pocket. Asn-99, Ser-138, Gly-142, Thr-143, and Gly-144 together coordinate GDP. 4 residues coordinate GTP: Ser-138, Gly-142, Thr-143, and Gly-144. Ser-172 bears the Phosphoserine; by CDK1 mark. Positions 177, 204, 222, and 226 each coordinate GDP. A GTP-binding site is contributed by Asn-204. Residue Asn-226 participates in GTP binding. Residues 425–450 form a disordered region; that stretch reads YQDATAEEEGEMYEDDEEESEAQGPK. A compositionally biased stretch (acidic residues) spans 429-450; sequence TAEEEGEMYEDDEEESEAQGPK. Residue Glu-438 is modified to 5-glutamyl polyglutamate. A Phosphoserine modification is found at Ser-444.

Belongs to the tubulin family. In terms of assembly, heterodimer of alpha- and beta-tubulin. A typical microtubule is a hollow water-filled tube with an outer diameter of 25 nm and an inner diameter of 15 nM. Alpha-beta heterodimers associate head-to-tail to form protofilaments running lengthwise along the microtubule wall with the beta-tubulin subunit facing the microtubule plus end conferring a structural polarity. Microtubules usually have 13 protofilaments but different protofilament numbers can be found in some organisms and specialized cells. Interacts with gamma-tubulin; the interaction allows microtubules to nucleate from the gamma-tubulin ring complex (gTuRC). Interacts with UNC5C (via cytoplasmic domain); this interaction is decreased by NTN1/Netrin-1. Interacts with NLRP5/MATER at cytoskeleton microtubules. Interacts with DPYSL5. Interacts with CFAP61. Mg(2+) serves as cofactor. In terms of processing, some glutamate residues at the C-terminus are polyglutamylated, resulting in polyglutamate chains on the gamma-carboxyl group. Polyglutamylation plays a key role in microtubule severing by spastin (SPAST). SPAST preferentially recognizes and acts on microtubules decorated with short polyglutamate tails: severing activity by SPAST increases as the number of glutamates per tubulin rises from one to eight, but decreases beyond this glutamylation threshold. Glutamylation is also involved in cilia motility. Post-translationally, some glutamate residues at the C-terminus are monoglycylated but not polyglycylated due to the absence of functional TTLL10 in human. Monoglycylation is mainly limited to tubulin incorporated into cilia and flagella axonemes, which is required for their stability and maintenance. Flagella glycylation controls sperm motility. Both polyglutamylation and monoglycylation can coexist on the same protein on adjacent residues, and lowering glycylation levels increases polyglutamylation, and reciprocally. Phosphorylated on Ser-172 by CDK1 during the cell cycle, from metaphase to telophase, but not in interphase. This phosphorylation inhibits tubulin incorporation into microtubules. Expression is primarily restricted to central and peripheral nervous system. Greatly increased expression in most cancerous tissues.

It is found in the cytoplasm. Its subcellular location is the cytoskeleton. The protein localises to the cell projection. The protein resides in the growth cone. It localises to the lamellipodium. It is found in the filopodium. Tubulin is the major constituent of microtubules, protein filaments consisting of alpha- and beta-tubulin heterodimers. Microtubules grow by the addition of GTP-tubulin dimers to the microtubule end, where a stabilizing cap forms. Below the cap, alpha-beta tubulin heterodimers are in GDP-bound state, owing to GTPase activity of alpha-tubulin. TUBB3 plays a critical role in proper axon guidance and maintenance. Binding of NTN1/Netrin-1 to its receptor UNC5C might cause dissociation of UNC5C from polymerized TUBB3 in microtubules and thereby lead to increased microtubule dynamics and axon repulsion. Plays a role in dorsal root ganglion axon projection towards the spinal cord. In Homo sapiens (Human), this protein is Tubulin beta-3 chain (TUBB3).